A 426-amino-acid chain; its full sequence is Branched-chain amino acid permease BrnQ (426 aa).

Transmembrane regions (helical) follow at residues 11 to 31 (LMLF…MLGL), 41 to 61 (ILGF…AVVL), 76 to 96 (IFGL…YALP), 111 to 131 (NALY…ALSW), 140 to 160 (LGKW…VLSV), 186 to 206 (GYMT…ISAF), 219 to 239 (VVSA…LGSI), 268 to 288 (IMFV…LISA), 296 to 316 (LLPG…SFGV), 324 to 344 (VLAV…TLVF), 358 to 378 (TYLF…IPAL), and 390 to 410 (MSLG…AIDW).

It belongs to the branched chain amino acid transporter family.

The protein localises to the cell membrane. Its function is as follows. Branched chain amino acid transport system, which transports isoleucine. The polypeptide is Branched-chain amino acid permease BrnQ (Corynebacterium glutamicum (strain ATCC 13032 / DSM 20300 / JCM 1318 / BCRC 11384 / CCUG 27702 / LMG 3730 / NBRC 12168 / NCIMB 10025 / NRRL B-2784 / 534)).